The primary structure comprises 278 residues: Elongation factor Ts (278 aa).

Residues 82–85 are involved in Mg(2+) ion dislocation from EF-Tu; the sequence is TDFV.

This sequence belongs to the EF-Ts family.

It is found in the cytoplasm. Its function is as follows. Associates with the EF-Tu.GDP complex and induces the exchange of GDP to GTP. It remains bound to the aminoacyl-tRNA.EF-Tu.GTP complex up to the GTP hydrolysis stage on the ribosome. The sequence is that of Elongation factor Ts (tsf) from Streptomyces ramocissimus.